A 202-amino-acid chain; its full sequence is Hypoxanthine-guanine phosphoribosyltransferase (202 aa).

Diphosphate-binding residues include K66 and G67. Mg(2+) contacts are provided by E122 and D123. Residue D126 is the Proton acceptor of the active site. GMP-binding positions include K154, 175-176, and D182; that span reads FV. A diphosphate-binding site is contributed by R188.

Belongs to the purine/pyrimidine phosphoribosyltransferase family. The cofactor is Mg(2+).

It is found in the cytoplasm. It catalyses the reaction IMP + diphosphate = hypoxanthine + 5-phospho-alpha-D-ribose 1-diphosphate. The catalysed reaction is GMP + diphosphate = guanine + 5-phospho-alpha-D-ribose 1-diphosphate. It participates in purine metabolism; IMP biosynthesis via salvage pathway; IMP from hypoxanthine: step 1/1. Its pathway is purine metabolism; GMP biosynthesis via salvage pathway; GMP from guanine: step 1/1. Purine salvage pathway enzyme that catalyzes the transfer of the ribosyl-5-phosphate group from 5-phospho-alpha-D-ribose 1-diphosphate (PRPP) to the N9 position of the 6-oxopurines hypoxanthine and guanine to form the corresponding ribonucleotides IMP (inosine 5'-monophosphate) and GMP (guanosine 5'-monophosphate), with the release of PPi. This Mycobacterium tuberculosis (strain CDC 1551 / Oshkosh) protein is Hypoxanthine-guanine phosphoribosyltransferase (hpt).